The following is a 703-amino-acid chain: Elongation factor G 1 (703 aa).

The region spanning 8-290 is the tr-type G domain; that stretch reads ERYRNIGISA…AVIDFLPSPV (283 aa). GTP contacts are provided by residues 17–24, 88–92, and 142–145; these read AHIDAGKT, DTPGH, and NKMD.

It belongs to the TRAFAC class translation factor GTPase superfamily. Classic translation factor GTPase family. EF-G/EF-2 subfamily.

Its subcellular location is the cytoplasm. Its function is as follows. Catalyzes the GTP-dependent ribosomal translocation step during translation elongation. During this step, the ribosome changes from the pre-translocational (PRE) to the post-translocational (POST) state as the newly formed A-site-bound peptidyl-tRNA and P-site-bound deacylated tRNA move to the P and E sites, respectively. Catalyzes the coordinated movement of the two tRNA molecules, the mRNA and conformational changes in the ribosome. The sequence is that of Elongation factor G 1 from Cupriavidus metallidurans (strain ATCC 43123 / DSM 2839 / NBRC 102507 / CH34) (Ralstonia metallidurans).